The following is a 430-amino-acid chain: MALNEGQIVTLAVDEIIETISAITPMAQKAKKYTPPAASMQRSSNTIWMPVEQESPTQEGWDLTDKATGLLELNVAVNMGEPDNDFFQLRADDLRDETAYRRRIQSAARKLANNVELKVANMAAEMGSLVITSPDAIGTNTADAWNFVADAEEIMFSRELNRDMGTSYFFNPQDYKKAGYDLTKRDIFGRIPEEAYRDGTIQRQVAGFDDVLRSPKLPVLTKSTATGITVSGAQSFKPVAWQLDNDGNKVNVDNRFATVTLSATTGMKRGDKISFAGVKFLGQMAKNVLAQDATFSVVRVVDGTHVEITPKPVALDDVSLSPEQRAYANVNTSLADAMAVNILNVKDARTNVFWADDAIRIVSQPIPANHELFAGMKTTSFSIPDVGLNGIFATQGDISTLSGLCRIALWYGVNATRPEAIGVGLPGQTA.

The interval 2–56 (ALNEGQIVTLAVDEIIETISAITPMAQKAKKYTPPAASMQRSSNTIWMPVEQESP) is binding to the capsid assembly scaffolding protein. The segment at 223–345 (STATGITVSG…DAMAVNILNV (123 aa)) is i domain.

Belongs to the P22 phage major capsid protein family. In terms of assembly, interacts (via N-terminus) with the capsid assembly scaffolding protein (via C-terminus); capsid proteins and scaffolding proteins form building blocks that assemble to form the procapsid. Interacts with the portal protein.

The protein resides in the virion. Self-assembles to form an icosahedral capsid with a T=7 symmetry. The protein is Major capsid protein (5) of Salmonella phage P22 (Bacteriophage P22).